The following is a 108-amino-acid chain: Large ribosomal subunit protein uL24 (108 aa).

It belongs to the universal ribosomal protein uL24 family. In terms of assembly, part of the 50S ribosomal subunit.

In terms of biological role, one of two assembly initiator proteins, it binds directly to the 5'-end of the 23S rRNA, where it nucleates assembly of the 50S subunit. One of the proteins that surrounds the polypeptide exit tunnel on the outside of the subunit. This chain is Large ribosomal subunit protein uL24, found in Salinispora tropica (strain ATCC BAA-916 / DSM 44818 / JCM 13857 / NBRC 105044 / CNB-440).